The primary structure comprises 503 residues: Maturase K (503 aa).

This sequence belongs to the intron maturase 2 family. MatK subfamily.

It is found in the plastid. The protein localises to the chloroplast. In terms of biological role, usually encoded in the trnK tRNA gene intron. Probably assists in splicing its own and other chloroplast group II introns. This chain is Maturase K, found in Kunzea pulchella (Red kunzea).